The chain runs to 64 residues: Prokaryotic ubiquitin-like protein Pup (64 aa).

The segment at 1–37 (MAQEQTKRGGGGGDDEDVTGTTAAGQERREKLAQDTD) is disordered. Residues 21–58 (TTAAGQERREKLAQDTDDLLDEIDDVLEENAEDFVRAY) form an ARC ATPase binding region. Positions 25–52 (GQERREKLAQDTDDLLDEIDDVLEENAE) form a coiled coil. Q64 carries the post-translational modification Deamidated glutamine. Residue Q64 forms an Isoglutamyl lysine isopeptide (Gln-Lys) (interchain with K-? in acceptor proteins) linkage.

The protein belongs to the prokaryotic ubiquitin-like protein family. In terms of assembly, strongly interacts with the proteasome-associated ATPase ARC through a hydrophobic interface; the interacting region of Pup lies in its C-terminal half. There is one Pup binding site per ARC hexamer ring. Is modified by deamidation of its C-terminal glutamine to glutamate by the deamidase Dop, a prerequisite to the subsequent pupylation process.

It participates in protein degradation; proteasomal Pup-dependent pathway. Functionally, protein modifier that is covalently attached to lysine residues of substrate proteins, thereby targeting them for proteasomal degradation. The tagging system is termed pupylation. The polypeptide is Prokaryotic ubiquitin-like protein Pup (Mycobacterium marinum (strain ATCC BAA-535 / M)).